The following is a 106-amino-acid chain: Iron-sulfur cluster assembly protein CyaY (106 aa).

Belongs to the frataxin family.

Its function is as follows. Involved in iron-sulfur (Fe-S) cluster assembly. May act as a regulator of Fe-S biogenesis. This is Iron-sulfur cluster assembly protein CyaY from Klebsiella pneumoniae subsp. pneumoniae (strain ATCC 700721 / MGH 78578).